The sequence spans 1379 residues: Hepatocyte growth factor receptor (1379 aa).

A signal peptide spans 1–24; it reads MKAPTVLAPGILVLLLSLVQRSHG. Residues 25-931 are Extracellular-facing; that stretch reads ECKEALVKSE…VIVQPDQNFA (907 aa). One can recognise a Sema domain in the interval 27-514; that stretch reads KEALVKSEMN…TGKKITKIPL (488 aa). The N-linked (GlcNAc...) asparagine glycan is linked to Asn45. Disulfide bonds link Cys95-Cys101, Cys98-Cys160, Cys133-Cys141, and Cys171-Cys174. Asn106 carries N-linked (GlcNAc...) asparagine glycosylation. Asn201 and Asn357 each carry an N-linked (GlcNAc...) asparagine glycan. Cystine bridges form between Cys297/Cys362 and Cys384/Cys396. N-linked (GlcNAc...) asparagine glycosylation is found at Asn398 and Asn404. Disulfide bonds link Cys519-Cys537, Cys525-Cys560, Cys528-Cys544, and Cys540-Cys550. IPT/TIG domains are found at residues 562–654, 656–738, and 741–835; these read PAVY…FSYV, PVIT…FSYR, and PVVY…LTYV. Thr581 is a glycosylation site (O-linked (Man) threonine). Asn606 and Asn634 each carry an N-linked (GlcNAc...) asparagine glycan. O-linked (Man) threonine glycans are attached at residues Thr675 and Thr760. 2 N-linked (GlcNAc...) asparagine glycosylation sites follow: Asn784 and Asn878. The chain crosses the membrane as a helical span at residues 932–954; it reads GLIIGAVSISVVVLLLSGLFLWM. Over 955–1379 the chain is Cytoplasmic; the sequence is RKRKHKDLGS…QDNIDGEGNT (425 aa). A Phosphoserine modification is found at Ser964. Position 975 is a phosphothreonine (Thr975). A phosphoserine mark is found at Ser988, Ser995, and Ser998. At Tyr1001 the chain carries Phosphotyrosine. Positions 1076 to 1343 constitute a Protein kinase domain; that stretch reads VHFNEVIGRG…RISSIFSTFI (268 aa). ATP-binding positions include 1082–1090 and Lys1108; that span reads IGRGHFGCV. Residue Asp1202 is the Proton acceptor of the active site. The interval 1210 to 1379 is interaction with RANBP9; sequence LDEKFTVKVA…QDNIDGEGNT (170 aa). Phosphotyrosine is present on Tyr1228. Tyr1232 and Tyr1233 each carry phosphotyrosine; by autocatalysis. Thr1287 is subject to Phosphothreonine. The interval 1318–1357 is interaction with MUC20; the sequence is WHPKAEMRPSFSELVSRISSIFSTFIGEHYVHVNATYVNV. 2 positions are modified to phosphotyrosine; by autocatalysis: Tyr1347 and Tyr1354. Position 1363 is a phosphotyrosine (Tyr1363).

The protein belongs to the protein kinase superfamily. Tyr protein kinase family. Heterodimer made of an alpha chain (50 kDa) and a beta chain (145 kDa) which are disulfide linked. Binds PLXNB1. Interacts when phosphorylated with downstream effectors including STAT3, PIK3R1, SRC, PCLG1, GRB2 and GAB1. When phosphorylated at Tyr-1354, interacts with INPPL1/SHIP2. Interacts with RANBP9 and RANBP10. Interacts with INPP5D/SHIP1. Interacts with SPSB1, SPSB2, SPSB4 and probably SPSB3. SPSB1 binding occurs in the presence and in the absence of HGF, however HGF treatment has a positive effect on this interaction. Interacts with MUC20; prevents interaction with GRB2 and suppresses hepatocyte growth factor-induced cell proliferation. Interacts with GRB10. Interacts with PTPN1 and PTPN2. Interacts with HSP90AA1 and HSP90AB1; the interaction suppresses MET kinase activity. Interacts with tensin TNS3. Interacts (when phosphorylated) with tensin TNS4 (via SH2 domain); the interaction increases MET protein stability by inhibiting MET endocytosis and subsequent lysosomal degradation. In terms of assembly, (Microbial infection) Interacts with L.monocytogenes InlB. InlB probably dimerizes upon binding to MET, which encourages subsequent dimerization of MET. Post-translationally, autophosphorylated in response to ligand binding on Tyr-1232 and Tyr-1233 in the kinase domain leading to further phosphorylation of Tyr-1347 and Tyr-1354 in the C-terminal multifunctional docking site. Dephosphorylated by PTPRJ at Tyr-1347 and Tyr-1363. Dephosphorylated by PTPN1 and PTPN2. In terms of processing, ubiquitinated. Ubiquitination by CBL regulates MET endocytosis, resulting in decreasing plasma membrane receptor abundance, and in endosomal degradation and/or recycling of internalized receptors. O-mannosylation of IPT/TIG domains by TMEM260 is required for protein maturation. O-mannosylated residues are composed of single mannose glycans that are not elongated or modified. Post-translationally, (Microbial infection) Tyrosine phosphorylation is stimulated by L.monocytogenes InlB.

Its subcellular location is the membrane. It catalyses the reaction L-tyrosyl-[protein] + ATP = O-phospho-L-tyrosyl-[protein] + ADP + H(+). Its activity is regulated as follows. In its inactive state, the C-terminal tail interacts with the catalytic domain and inhibits the kinase activity. Upon ligand binding, the C-terminal tail is displaced and becomes phosphorylated, thus increasing the kinase activity. In terms of biological role, receptor tyrosine kinase that transduces signals from the extracellular matrix into the cytoplasm by binding to hepatocyte growth factor/HGF ligand. Regulates many physiological processes including proliferation, scattering, morphogenesis and survival. Ligand binding at the cell surface induces autophosphorylation of MET on its intracellular domain that provides docking sites for downstream signaling molecules. Following activation by ligand, interacts with the PI3-kinase subunit PIK3R1, PLCG1, SRC, GRB2, STAT3 or the adapter GAB1. Recruitment of these downstream effectors by MET leads to the activation of several signaling cascades including the RAS-ERK, PI3 kinase-AKT, or PLCgamma-PKC. The RAS-ERK activation is associated with the morphogenetic effects while PI3K/AKT coordinates prosurvival effects. During embryonic development, MET signaling plays a role in gastrulation, development and migration of neuronal precursors, angiogenesis and kidney formation. During skeletal muscle development, it is crucial for the migration of muscle progenitor cells and for the proliferation of secondary myoblasts. In adults, participates in wound healing as well as organ regeneration and tissue remodeling. Also promotes differentiation and proliferation of hematopoietic cells. May regulate cortical bone osteogenesis. Its function is as follows. (Microbial infection) Acts as a receptor for Listeria monocytogenes internalin InlB, mediating entry of the pathogen into cells. This chain is Hepatocyte growth factor receptor (Met), found in Mus musculus (Mouse).